The chain runs to 323 residues: Phosphoribosylaminoimidazole-succinocarboxamide synthase (323 aa).

The protein belongs to the SAICAR synthetase family.

It carries out the reaction 5-amino-1-(5-phospho-D-ribosyl)imidazole-4-carboxylate + L-aspartate + ATP = (2S)-2-[5-amino-1-(5-phospho-beta-D-ribosyl)imidazole-4-carboxamido]succinate + ADP + phosphate + 2 H(+). The protein operates within purine metabolism; IMP biosynthesis via de novo pathway; 5-amino-1-(5-phospho-D-ribosyl)imidazole-4-carboxamide from 5-amino-1-(5-phospho-D-ribosyl)imidazole-4-carboxylate: step 1/2. The protein is Phosphoribosylaminoimidazole-succinocarboxamide synthase of Azobacteroides pseudotrichonymphae genomovar. CFP2.